Reading from the N-terminus, the 473-residue chain is Myocyte-specific enhancer factor 2C (473 aa).

An MADS-box domain is found at Arg-3 to Tyr-57. The residue at position 4 (Lys-4) is an N6-acetyllysine. A DNA-binding region (mef2-type) is located at residues Ala-58–Glu-86. Position 59 is a phosphoserine; by CK2 (Ser-59). The interval Lys-91 to Lys-116 is disordered. 3 positions are modified to phosphoserine: Ser-98, Ser-106, and Ser-110. 2 positions are modified to N6-acetyllysine: Lys-116 and Lys-119. A disordered region spans residues Asn-180–Gly-224. Ser-222 and Ser-228 each carry phosphoserine. An N6-acetyllysine mark is found at Lys-234 and Lys-239. Ser-240 carries the phosphoserine modification. An N6-acetyllysine mark is found at Lys-252 and Lys-264. Residues Ser-271–Leu-278 form a beta domain region. A phosphothreonine; by MAPK14 mark is found at Thr-293 and Thr-300. A transcription repressor region spans residues Ala-368 to Arg-399. The span at Ser-375–Ile-390 shows a compositional bias: polar residues. Residues Ser-375–Thr-473 form a disordered region. Lys-391 participates in a covalent cross-link: Glycyl lysine isopeptide (Lys-Gly) (interchain with G-Cter in SUMO). Phosphoserine; by CDK5 is present on Ser-396. Ser-419 carries the post-translational modification Phosphoserine; by MAPK7. Residues Ser-419–Asp-432 show a composition bias toward low complexity. Residues Gly-433–Phe-443 show a composition bias toward basic and acidic residues. Ser-445 bears the Phosphoserine mark.

This sequence belongs to the MEF2 family. Forms a complex with class II HDACs in undifferentiating cells. On myogenic differentiation, HDACs are released into the cytoplasm allowing MEF2s to interact with other proteins for activation. Interacts with EP300 in differentiating cells; the interaction acetylates MEF2C leading to increased DNA binding and activation. Interacts with HDAC7 and CARM1. Interacts with HDAC4 and HDAC9; the interaction with HDACs represses transcriptional activity. Interacts with LPIN1. Interacts with MYOCD. Interacts with AKAP13. Interacts with FOXK1; the interaction inhibits MEF2C transactivation activity. Interacts (via N-terminus) with HABP4; this interaction decreases DNA-binding activity of MEF2C in myocardial cells in response to mechanical stress. Interacts with JPH2; interaction specifically takes place with the Junctophilin-2 N-terminal fragment cleavage product of JPH2. Interacts (via MADS box) with SOX18. Interacts with PHF7; the interaction promotes MEF2C binding to its transcription targets. In terms of processing, phosphorylation on Ser-59 enhances DNA binding activity. Phosphorylation on Ser-396 is required for Lys-391 sumoylation and inhibits transcriptional activity. Acetylated by p300 on several sites in diffentiating myocytes. Acetylation on Lys-4 increases DNA binding and transactivation. Post-translationally, sumoylated on Lys-391 with SUMO2 but not by SUMO1 represses transcriptional activity. In terms of processing, proteolytically cleaved in cerebellar granule neurons, probably by caspase 7, following neurotoxicity. Preferentially cleaves the CDK5-mediated hyperphosphorylated form which leads to neuron apoptosis and transcriptional inactivation. In terms of tissue distribution, expressed in brain and skeletal muscle.

The protein localises to the nucleus. It localises to the cytoplasm. The protein resides in the sarcoplasm. In terms of biological role, transcription activator which binds specifically to the MEF2 element present in the regulatory regions of many muscle-specific genes. Controls cardiac morphogenesis and myogenesis, and is also involved in vascular development. Enhances transcriptional activation mediated by SOX18. Plays an essential role in hippocampal-dependent learning and memory by suppressing the number of excitatory synapses and thus regulating basal and evoked synaptic transmission. Crucial for normal neuronal development, distribution, and electrical activity in the neocortex. Necessary for proper development of megakaryocytes and platelets and for bone marrow B-lymphopoiesis. Required for B-cell survival and proliferation in response to BCR stimulation, efficient IgG1 antibody responses to T-cell-dependent antigens and for normal induction of germinal center B-cells. May also be involved in neurogenesis and in the development of cortical architecture. Isoforms that lack the repressor domain are more active than isoform 1. In Homo sapiens (Human), this protein is Myocyte-specific enhancer factor 2C.